Here is a 673-residue protein sequence, read N- to C-terminus: MSKPFKLNSAFKPSGDQPEAIRRLEEGLEDGLAHQTLLGVTGSGKTFTIANVIADLQRPTMVLAPNKTLAAQLYGEMKEFFPENAVEYFVSYYDYYQPEAYVPSSDTFIEKDASVNEHIEQMRLSATKAMLERRDVVVVASVSAIYGLGDPDLYLKMMLHLTVGMIIDQRAILRRLAELQYARNDQAFQRGTFRVRGEVIDIFPAESDDIALRVELFDEEVERLSLFDPLTGQIVSTIPRFTIYPKTHYVTPRERIVQAMEEIKEELAARRKVLLENNKLLEEQRLTQRTQFDLEMMNELGYCSGIENYSRFLSGRGPGEPPPTLFDYLPADGLLVVDESHVTIPQIGGMYRGDRARKETLVEYGFRLPSALDNRPLKFEEFEALAPQTIYVSATPGNYELEKSGGDVVDQVVRPTGLLDPIIEVRPVATQVDDLLSEIRQRAAINERVLVTTLTKRMAEDLTEYLEEHGERVRYLHSDIDTVERMEIIRDLRLGEFDVLVGINLLREGLDMPEVSLVAILDADKEGFLRSERSLIQTIGRAARNVNGKAILYGDKITPSMAKAIGETERRREKQQKYNEEHGITPQGLNKKVVDILALGQNIAKTKAKGRGKSRPIVEPDNVPMDMSPKALQQKIHELEGLMMQHAQNLEFEEAAQIRDQLHQLRDLFIAAS.

The 158-residue stretch at 26-183 folds into the Helicase ATP-binding domain; the sequence is EGLEDGLAHQ…RRLAELQYAR (158 aa). An ATP-binding site is contributed by 39–46; that stretch reads GVTGSGKT. Positions 92 to 115 match the Beta-hairpin motif; sequence YYDYYQPEAYVPSSDTFIEKDASV. Positions 431–597 constitute a Helicase C-terminal domain; sequence QVDDLLSEIR…GLNKKVVDIL (167 aa). Positions 608–627 are disordered; that stretch reads AKGRGKSRPIVEPDNVPMDM. Residues 633–668 form the UVR domain; the sequence is QQKIHELEGLMMQHAQNLEFEEAAQIRDQLHQLRDL.

The protein belongs to the UvrB family. Forms a heterotetramer with UvrA during the search for lesions. Interacts with UvrC in an incision complex.

The protein localises to the cytoplasm. In terms of biological role, the UvrABC repair system catalyzes the recognition and processing of DNA lesions. A damage recognition complex composed of 2 UvrA and 2 UvrB subunits scans DNA for abnormalities. Upon binding of the UvrA(2)B(2) complex to a putative damaged site, the DNA wraps around one UvrB monomer. DNA wrap is dependent on ATP binding by UvrB and probably causes local melting of the DNA helix, facilitating insertion of UvrB beta-hairpin between the DNA strands. Then UvrB probes one DNA strand for the presence of a lesion. If a lesion is found the UvrA subunits dissociate and the UvrB-DNA preincision complex is formed. This complex is subsequently bound by UvrC and the second UvrB is released. If no lesion is found, the DNA wraps around the other UvrB subunit that will check the other stand for damage. This chain is UvrABC system protein B, found in Escherichia coli O7:K1 (strain IAI39 / ExPEC).